The sequence spans 473 residues: 23S rRNA (uracil(1939)-C(5))-methyltransferase RlmD (473 aa).

The segment at 6–27 is disordered; the sequence is KPSKGKNKSNVKGRVRGAGSGE. The segment covering 8 to 20 has biased composition (basic residues); the sequence is SKGKNKSNVKGRV. In terms of domain architecture, TRAM spans 42–99; it reads DDINAANEAVTIDGMDWQGQGVARGDTLYFVDGALPGETVEIKALSSNKQIVNAKVTK. [4Fe-4S] cluster-binding residues include Cys112, Cys118, Cys121, and Cys199. Residues Gln304, Phe333, Asn338, Glu354, Asp381, and Asp402 each contribute to the S-adenosyl-L-methionine site. Cys428 functions as the Nucleophile in the catalytic mechanism.

This sequence belongs to the class I-like SAM-binding methyltransferase superfamily. RNA M5U methyltransferase family. RlmD subfamily.

The enzyme catalyses uridine(1939) in 23S rRNA + S-adenosyl-L-methionine = 5-methyluridine(1939) in 23S rRNA + S-adenosyl-L-homocysteine + H(+). In terms of biological role, catalyzes the formation of 5-methyl-uridine at position 1939 (m5U1939) in 23S rRNA. This is 23S rRNA (uracil(1939)-C(5))-methyltransferase RlmD from Alteromonas naphthalenivorans.